Here is a 662-residue protein sequence, read N- to C-terminus: Biosynthetic arginine decarboxylase (662 aa).

Lysine 127 carries the post-translational modification N6-(pyridoxal phosphate)lysine. Residue 307 to 317 (FDVGGGLGVDY) coordinates substrate.

This sequence belongs to the Orn/Lys/Arg decarboxylase class-II family. SpeA subfamily. As to quaternary structure, homotetramer. Mg(2+) serves as cofactor. Pyridoxal 5'-phosphate is required as a cofactor.

It is found in the periplasm. The catalysed reaction is L-arginine + H(+) = agmatine + CO2. Its pathway is amine and polyamine biosynthesis; agmatine biosynthesis; agmatine from L-arginine: step 1/1. Its function is as follows. Catalyzes the biosynthesis of agmatine from arginine. The protein is Biosynthetic arginine decarboxylase of Shigella flexneri.